The sequence spans 580 residues: FAD-dependent monooxygenase yanF (580 aa).

The interval 1–21 (MSSSAECRPIGWGGWGPDPNT) is disordered. Residues 150-322 (CRLNASCIVT…VEYDLTTNTG (173 aa)) enclose the FAD-binding PCMH-type domain. H187 carries the pros-8alpha-FAD histidine modification.

It belongs to the oxygen-dependent FAD-linked oxidoreductase family.

The protein operates within secondary metabolite biosynthesis; terpenoid biosynthesis. Its function is as follows. FAD-dependent monooxygenase; part of the gene cluster that mediates the biosynthesis of yanuthone D, a fungal isoprenoid epoxycyclohexenone that acts as an antibiotic against fungi and bacteria. The first step of the pathway is the synthesis of 6-methylsalicylic acid (6-MSA) by the polyketide synthase yanA. 6-MSA is then converted to m-cresol by the decarboxylase yanB. The cytochrome P450 monooxygenase yanC then catalyzes the oxidation of m-cresol to toluquinol. Epoxidation of toluquinol is then performed by the short chain dehydrogenase yanD, with the help of yanE, and a further prenylated by yanG leads to 7-deacetoxyyanuthone A. The next step is the hydroxylation of C-22 of 7-deacetoxyyanuthone A by the cytochrome P450 monooxygenase yanH to yield 22-deacetylyanuthone A. O-Mevalon transferase yanI then attaches mevalon to the hydroxyl group of 22-deacetylyanuthone A to produce yanuthone E. Finally, the FAD-dependent monooxygenase yanF oxidizes the hydroxyl group at C15 of yanuthone E to form yanuthone D. Furthermore, several branching points in the pathway lead to the production of yanuthones F and G from 7-deacetoxyyanuthone A; yanuthones H and I from 22-deacetylyanuthone A; and yanuthone J from yanuthone E. This Aspergillus niger (strain ATCC 1015 / CBS 113.46 / FGSC A1144 / LSHB Ac4 / NCTC 3858a / NRRL 328 / USDA 3528.7) protein is FAD-dependent monooxygenase yanF.